The chain runs to 210 residues: Large ribosomal subunit protein uL4 (210 aa).

The segment covering 41–51 (ANARQGTQSTK) has biased composition (polar residues). Disordered regions lie at residues 41-60 (ANAR…QGSS) and 67-98 (KGTG…DFSK).

The protein belongs to the universal ribosomal protein uL4 family. Part of the 50S ribosomal subunit.

Its function is as follows. One of the primary rRNA binding proteins, this protein initially binds near the 5'-end of the 23S rRNA. It is important during the early stages of 50S assembly. It makes multiple contacts with different domains of the 23S rRNA in the assembled 50S subunit and ribosome. Forms part of the polypeptide exit tunnel. The sequence is that of Large ribosomal subunit protein uL4 from Dehalococcoides mccartyi (strain ATCC BAA-2100 / JCM 16839 / KCTC 5957 / BAV1).